A 244-amino-acid chain; its full sequence is Phosphoadenosine 5'-phosphosulfate reductase (244 aa).

Cys239 (nucleophile; cysteine thiosulfonate intermediate) is an active-site residue.

Belongs to the PAPS reductase family. CysH subfamily.

The protein localises to the cytoplasm. The catalysed reaction is [thioredoxin]-disulfide + sulfite + adenosine 3',5'-bisphosphate + 2 H(+) = [thioredoxin]-dithiol + 3'-phosphoadenylyl sulfate. Its pathway is sulfur metabolism; hydrogen sulfide biosynthesis; sulfite from sulfate: step 3/3. Catalyzes the formation of sulfite from phosphoadenosine 5'-phosphosulfate (PAPS) using thioredoxin as an electron donor. This is Phosphoadenosine 5'-phosphosulfate reductase from Shigella flexneri serotype 5b (strain 8401).